We begin with the raw amino-acid sequence, 274 residues long: Outer surface protein A (274 aa).

Positions Met1 to Ala16 are cleaved as a signal peptide. Residue Cys17 is the site of N-palmitoyl cysteine attachment. Residue Cys17 is the site of S-diacylglycerol cysteine attachment.

Belongs to the OspA lipoprotein family.

It localises to the cell outer membrane. It is found in the cell surface. This chain is Outer surface protein A, found in Borreliella burgdorferi (Lyme disease spirochete).